The primary structure comprises 120 residues: NAD(P)H-quinone oxidoreductase subunit 3, chloroplastic (120 aa).

3 helical membrane-spanning segments follow: residues 9 to 29, 64 to 84, and 88 to 108; these read IFWAFLIISSLIPILAFLISG, MFALVFVVFDVETVFLYPWAM, and VLGVSVFIEALIFVLIPIIGS.

It belongs to the complex I subunit 3 family. NDH is composed of at least 16 different subunits, 5 of which are encoded in the nucleus.

Its subcellular location is the plastid. It localises to the chloroplast thylakoid membrane. The enzyme catalyses a plastoquinone + NADH + (n+1) H(+)(in) = a plastoquinol + NAD(+) + n H(+)(out). It carries out the reaction a plastoquinone + NADPH + (n+1) H(+)(in) = a plastoquinol + NADP(+) + n H(+)(out). Its function is as follows. NDH shuttles electrons from NAD(P)H:plastoquinone, via FMN and iron-sulfur (Fe-S) centers, to quinones in the photosynthetic chain and possibly in a chloroplast respiratory chain. The immediate electron acceptor for the enzyme in this species is believed to be plastoquinone. Couples the redox reaction to proton translocation, and thus conserves the redox energy in a proton gradient. This Drimys granadensis protein is NAD(P)H-quinone oxidoreductase subunit 3, chloroplastic.